A 358-amino-acid chain; its full sequence is Trace amine-associated receptor 7f (358 aa).

Residues 1–47 (MSIADETVSWNQDSILSRDLFSATSAELCYENLNRSCVRSPYSPGPR) lie on the Extracellular side of the membrane. N-linked (GlcNAc...) asparagine glycosylation occurs at N34. 2 cysteine pairs are disulfide-bonded: C37–C201 and C120–C205. A helical membrane pass occupies residues 48 to 68 (LILYAVFGFGAVLAVCGNLLV). Over 69–83 (MTSILHFRQLHSPAN) the chain is Cytoplasmic. The chain crosses the membrane as a helical span at residues 84–104 (FLVASLACADFLVGVMVMPFS). Topologically, residues 105-121 (MVRSVEGCWYFGDSYCK) are extracellular. The chain crosses the membrane as a helical span at residues 122 to 143 (LHTCFDVSFCYCSLFHLCFISV). At 144 to 166 (DRYIAVSDPLAYPTRFTASVSGK) the chain is on the cytoplasmic side. Residues 167–187 (CITFSWLLSISYGFSLIYTGA) traverse the membrane as a helical segment. Over 188–212 (SEAGLEDLVSSLTCVGGCQIAVNQT) the chain is Extracellular. Residue N210 is glycosylated (N-linked (GlcNAc...) asparagine). Residues 213 to 233 (WVFINFSVFLIPTLVMITVYS) form a helical membrane-spanning segment. At 234–274 (KIFLIAKQQAQNIEKMSKQTARASDSYKDRVAKRERKAAKT) the chain is on the cytoplasmic side. Residues 275-295 (LGIAVAAFLLSWLPYFIDSFI) form a helical membrane-spanning segment. Topologically, residues 296–309 (DAFLGFITPTYVYE) are extracellular. The helical transmembrane segment at 310–333 (ILVWIVYYNSAMNPLIYAFFYPWF) threads the bilayer. At 334–358 (RKAIKLTVTGKILRENSSTTNLFSE) the chain is on the cytoplasmic side.

This sequence belongs to the G-protein coupled receptor 1 family. As to expression, specifically expressed in neurons of the olfactory epithelium.

The protein resides in the cell membrane. Olfactory receptor activated by trace amines, such as N-methylpiperidine and N,N-dimethylcyclohexylamine. Trace amine compounds are enriched in animal body fluids and act on trace amine-associated receptors (TAARs) to elicit both intraspecific and interspecific innate behaviors. Ligand-binding causes a conformation change that triggers signaling via G(s)-class of G alpha proteins (GNAL or GNAS). The sequence is that of Trace amine-associated receptor 7f from Mus musculus (Mouse).